Here is a 331-residue protein sequence, read N- to C-terminus: 6-phosphogluconolactonase (331 aa).

The residue at position 287 (Lys287) is an N6-acetyllysine.

Belongs to the cycloisomerase 2 family.

It carries out the reaction 6-phospho-D-glucono-1,5-lactone + H2O = 6-phospho-D-gluconate + H(+). Its pathway is carbohydrate degradation; pentose phosphate pathway; D-ribulose 5-phosphate from D-glucose 6-phosphate (oxidative stage): step 2/3. Catalyzes the hydrolysis of 6-phosphogluconolactone to 6-phosphogluconate. The protein is 6-phosphogluconolactonase of Shigella boydii serotype 18 (strain CDC 3083-94 / BS512).